Consider the following 619-residue polypeptide: Chaperone protein HscA homolog (619 aa).

This sequence belongs to the heat shock protein 70 family.

Its function is as follows. Chaperone involved in the maturation of iron-sulfur cluster-containing proteins. Has a low intrinsic ATPase activity which is markedly stimulated by HscB. In Laribacter hongkongensis (strain HLHK9), this protein is Chaperone protein HscA homolog.